We begin with the raw amino-acid sequence, 211 residues long: Large ribosomal subunit protein eL13 (211 aa).

K16 is subject to N6-acetyllysine. S52, S77, and S106 each carry phosphoserine. Residues K123 and K145 each participate in a glycyl lysine isopeptide (Lys-Gly) (interchain with G-Cter in SUMO2) cross-link. K174 is covalently cross-linked (Glycyl lysine isopeptide (Lys-Gly) (interchain with G-Cter in SUMO1); alternate). Glycyl lysine isopeptide (Lys-Gly) (interchain with G-Cter in SUMO2); alternate cross-links involve residues K174 and K177. K177 is subject to N6-acetyllysine; alternate.

It belongs to the eukaryotic ribosomal protein eL13 family. In terms of assembly, component of the large ribosomal subunit.

Its subcellular location is the cytoplasm. Its function is as follows. Component of the large ribosomal subunit. The ribosome is a large ribonucleoprotein complex responsible for the synthesis of proteins in the cell. This Mus musculus (Mouse) protein is Large ribosomal subunit protein eL13 (Rpl13).